Consider the following 360-residue polypeptide: Phospho-N-acetylmuramoyl-pentapeptide-transferase (360 aa).

The next 10 membrane-spanning stretches (helical) occupy residues 27 to 47 (IVSLLTALFISLWMGPRLIGW), 72 to 92 (PTMGGLMILTSITISVLMWAY), 94 to 114 (SNPYVWCVLFVLLGYGIVGFV), 132 to 152 (WKYFWQSVIALVVAFTMYCIG), 168 to 188 (IMPQLGLLYILLSYFVIVGTS), 199 to 219 (GLAIMPTVFVAAGMGLVAWAT), 236 to 256 (AGELVIVCTAIVGAGLGFLWF), 263 to 283 (VFMGDVGSLALGGALGTIAVL), 288 to 308 (FLLVIMGGVFVMETLSVILQV), and 338 to 358 (VIVRFWIISLMLVLIGLATLK).

Belongs to the glycosyltransferase 4 family. MraY subfamily. It depends on Mg(2+) as a cofactor.

The protein localises to the cell inner membrane. The enzyme catalyses UDP-N-acetyl-alpha-D-muramoyl-L-alanyl-gamma-D-glutamyl-meso-2,6-diaminopimeloyl-D-alanyl-D-alanine + di-trans,octa-cis-undecaprenyl phosphate = di-trans,octa-cis-undecaprenyl diphospho-N-acetyl-alpha-D-muramoyl-L-alanyl-D-glutamyl-meso-2,6-diaminopimeloyl-D-alanyl-D-alanine + UMP. It functions in the pathway cell wall biogenesis; peptidoglycan biosynthesis. Its function is as follows. Catalyzes the initial step of the lipid cycle reactions in the biosynthesis of the cell wall peptidoglycan: transfers peptidoglycan precursor phospho-MurNAc-pentapeptide from UDP-MurNAc-pentapeptide onto the lipid carrier undecaprenyl phosphate, yielding undecaprenyl-pyrophosphoryl-MurNAc-pentapeptide, known as lipid I. The polypeptide is Phospho-N-acetylmuramoyl-pentapeptide-transferase (Edwardsiella ictaluri (strain 93-146)).